A 242-amino-acid polypeptide reads, in one-letter code: Large ribosomal subunit protein uL1 (242 aa).

It belongs to the universal ribosomal protein uL1 family. In terms of assembly, part of the 50S ribosomal subunit.

In terms of biological role, binds directly to 23S rRNA. The L1 stalk is quite mobile in the ribosome, and is involved in E site tRNA release. Functionally, protein L1 is also a translational repressor protein, it controls the translation of the L11 operon by binding to its mRNA. This is Large ribosomal subunit protein uL1 from Streptomyces virginiae (Streptomyces cinnamonensis).